The sequence spans 374 residues: NADH-quinone oxidoreductase subunit D 1 (374 aa).

The protein belongs to the complex I 49 kDa subunit family. As to quaternary structure, NDH-1 is composed of 14 different subunits. Subunits NuoB, C, D, E, F, and G constitute the peripheral sector of the complex.

The protein localises to the cell membrane. It carries out the reaction a quinone + NADH + 5 H(+)(in) = a quinol + NAD(+) + 4 H(+)(out). Functionally, NDH-1 shuttles electrons from NADH, via FMN and iron-sulfur (Fe-S) centers, to quinones in the respiratory chain. The immediate electron acceptor for the enzyme in this species is believed to be ubiquinone. Couples the redox reaction to proton translocation (for every two electrons transferred, four hydrogen ions are translocated across the cytoplasmic membrane), and thus conserves the redox energy in a proton gradient. The chain is NADH-quinone oxidoreductase subunit D 1 from Roseiflexus sp. (strain RS-1).